We begin with the raw amino-acid sequence, 230 residues long: V-type proton ATPase subunit E (230 aa).

Belongs to the V-ATPase E subunit family. V-ATPase is a heteromultimeric enzyme composed of a peripheral catalytic V1 complex (components A to H) attached to an integral membrane V0 proton pore complex (components: a, c, c', c'', d, e, f and VOA1).

It localises to the vacuole membrane. Functionally, subunit of the V1 complex of vacuolar(H+)-ATPase (V-ATPase), a multisubunit enzyme composed of a peripheral complex (V1) that hydrolyzes ATP and a membrane integral complex (V0) that translocates protons. V-ATPase is responsible for acidifying and maintaining the pH of intracellular compartments. This is V-type proton ATPase subunit E from Neurospora crassa (strain ATCC 24698 / 74-OR23-1A / CBS 708.71 / DSM 1257 / FGSC 987).